The chain runs to 292 residues: UPF0761 membrane protein Ping_3482 (292 aa).

Helical transmembrane passes span 43–63, 100–120, 139–159, 179–199, 209–229, and 243–263; these read LLSIVPLLAVIFYMLAAFPVF, MSMMGIGSLIAIALLLISTID, FTIYWTILSLGPVIIGASLAL, LLSLMPFILTWLTFAGVYTLV, ALIGGLIAAILFFFGTDLFRL, and ALAVIPILFVWIYYSWLIVLI.

The protein belongs to the UPF0761 family.

It is found in the cell inner membrane. This is UPF0761 membrane protein Ping_3482 from Psychromonas ingrahamii (strain DSM 17664 / CCUG 51855 / 37).